Reading from the N-terminus, the 411-residue chain is Formate-dependent phosphoribosylglycinamide formyltransferase (411 aa).

Residue E25 to L26 coordinates N(1)-(5-phospho-beta-D-ribosyl)glycinamide. ATP-binding positions include R118, K159, S164–Q169, E199–I202, and E207. The ATP-grasp domain maps to T123 to L318. E277 and E289 together coordinate Mg(2+). Residues D296, K366, and R373–R374 contribute to the N(1)-(5-phospho-beta-D-ribosyl)glycinamide site.

It belongs to the PurK/PurT family. Homodimer.

It carries out the reaction N(1)-(5-phospho-beta-D-ribosyl)glycinamide + formate + ATP = N(2)-formyl-N(1)-(5-phospho-beta-D-ribosyl)glycinamide + ADP + phosphate + H(+). Its pathway is purine metabolism; IMP biosynthesis via de novo pathway; N(2)-formyl-N(1)-(5-phospho-D-ribosyl)glycinamide from N(1)-(5-phospho-D-ribosyl)glycinamide (formate route): step 1/1. In terms of biological role, involved in the de novo purine biosynthesis. Catalyzes the transfer of formate to 5-phospho-ribosyl-glycinamide (GAR), producing 5-phospho-ribosyl-N-formylglycinamide (FGAR). Formate is provided by PurU via hydrolysis of 10-formyl-tetrahydrofolate. The polypeptide is Formate-dependent phosphoribosylglycinamide formyltransferase (Corynebacterium jeikeium (strain K411)).